Consider the following 864-residue polypeptide: Dynamin-1 (864 aa).

The region spanning 28-294 (DLDLPQIAVV…LTNHIRDTLP (267 aa)) is the Dynamin-type G domain. Residues 38–45 (GGQSAGKS) are G1 motif. 7 residues coordinate GDP: serine 41, glycine 43, lysine 44, serine 45, serine 46, arginine 59, and glycine 60. Positions 64–66 (VTR) are G2 motif. At tyrosine 80 the chain carries Phosphotyrosine. Tyrosine 125 is subject to 3'-nitrotyrosine; alternate. Position 125 is a phosphotyrosine; alternate (tyrosine 125). The G3 motif stretch occupies residues 136 to 139 (DLPG). The G4 motif stretch occupies residues 205-208 (TKLD). 6 residues coordinate GDP: lysine 206, aspartate 208, aspartate 211, asparagine 236, arginine 237, and glutamine 239. The tract at residues 235–238 (VNRS) is G5 motif. Residues serine 306 and serine 347 each carry the phosphoserine modification. Position 354 is a phosphotyrosine (tyrosine 354). A Phosphoserine modification is found at serine 512. The 107-residue stretch at 519–625 (LVIRKGWLTI…WKASFLRAGV (107 aa)) folds into the PH domain. Positions 659–750 (VETIRNLVDS…IIGDINTTTV (92 aa)) constitute a GED domain. Residues 767 to 864 (SVPAGRRSPT…PESPRPPFDL (98 aa)) are disordered. At serine 774 the chain carries Phosphoserine; by CDK5. Serine 778 carries the post-translational modification Phosphoserine. Arginine 796 is subject to Omega-N-methylarginine. The residue at position 822 (serine 822) is a Phosphoserine. The span at 825–843 (PFGPPPQVPSRPNRAPPGV) shows a compositional bias: pro residues. A phosphoserine mark is found at serine 851 and serine 857.

This sequence belongs to the TRAFAC class dynamin-like GTPase superfamily. Dynamin/Fzo/YdjA family. In terms of assembly, homodimer; homodimerization is mediated by the dynamin-type G domain which promotes assembly-stimulated GTPase activity. Homo-tetramer formed from two dimers in the absence of lipid. Oligomerizes into a helical polymer that self-assembles around the vesicle membrane, when associated to the menbrane through lipid binding. Interacts (via C-terminal proline-rich domain (PRD)) with SNX9 (via SH3 domain); this interaction allows regulation of DNM1 self-assembly during late stages of endocytic vesicle formation and supports DNM1's early functions in accelerating clathrin-coated pits (CCPs) maturation in non neuronals cell. Interacts (via C-terminal proline-rich domain (PRD)) with MYO1E (via SH3 domain); this interaction regulates receptor-mediated endocytosis. Interacts with SNX33 (via SH3 domain); this interaction decreases DNM1-dependent endocytosis. Interacts with DIAPH1. Interacts with GRB2 (via SH3 domain); this interaction mediates disassembly of DNM1 polymers, therefore modulates self-assembly. Forms a complex with BIN1 (via SH3 domain) and SH3GL2 (via SH3 domain). Forms a complex with SH3GL2 (via SH3 domain) and AMPH (via SH3 domain). Forms a complex with SH3GL2 (via SH3 domain) and SYNJ1. Interacts with AMPH. Interacts (via C-terminal proline-rich domain (PRD)) with SYT1; this interaction facilitates vesicle fission during clathrin-mediated endocytosis (CME). Interacts (via C-terminal proline-rich domain (PRD)) with PLCG1 (via SH3 domain); this interaction stimulates the release of GDP from DNM1 and enhances DNM1-dependent endocytosis. Interacts with SNPH; this interaction inhibits the binding of DNM1 to AMPH and DNM1-receptor-mediated endocytosis. Interacts with CAV1. Interacts with SH3GLB1 (via SH3 domain). Interacts with PACSIN1 (via SH3 domain), PACSIN2 (via SH3 domain) and PACSIN3 (via SH3 domain). Interacts with UNC119; this interaction decreases DNM1's GTPase activity and affects DNM1's interaction with AMPH. Interacts (GTP-bound form) with DNAJC6; this interaction allows clathrin-coated vesicle (CCV) formation at the plasma membrane. Post-translationally, phosphorylation at Ser-774 by GSK3B/GSK3-beta leads to inactivation of receptor-mediated endocytosis in non-neuronal cells. Dephosphorylation at Ser-774, through the EGFR downstream signaling, leads to activation and regulates early stages of clathrin-mediated endocytosis (CME). Phosphorylated by CDK5 leading to synaptic vesicle endocytosis (SVE) activation. As to expression, brain-specific (peripheral sensory neurons).

Its subcellular location is the cytoplasmic vesicle. It is found in the clathrin-coated vesicle. The protein localises to the golgi apparatus. It localises to the cell membrane. The protein resides in the membrane. Its subcellular location is the clathrin-coated pit. It is found in the presynapse. The protein localises to the secretory vesicle. It localises to the chromaffin granule. It carries out the reaction GTP + H2O = GDP + phosphate + H(+). Functionally, catalyzes the hydrolysis of GTP and utilizes this energy to mediate vesicle scission and participates in many forms of endocytosis, such as clathrin-mediated endocytosis or synaptic vesicle endocytosis as well as rapid endocytosis (RE). Associates to the membrane, through lipid binding, and self-assembles into rings and stacks of interconnected rings through oligomerization to form a helical polymer around the vesicle membrane leading to constriction of invaginated coated pits around their necks. Self-assembly of the helical polymer induces membrane tubules narrowing until the polymer reaches a length sufficient to trigger GTP hydrolysis. Depending on the curvature imposed on the tubules, membrane detachment from the helical polymer upon GTP hydrolysis can cause spontaneous hemifission followed by complete fission. May play a role in regulating early stages of clathrin-mediated endocytosis in non-neuronal cells through its activation by dephosphorylation via the signaling downstream of EGFR. Controls vesicle size at a step before fission, during formation of membrane pits, at hippocampal synapses. Controls plastic adaptation of the synaptic vesicle recycling machinery to high levels of activity. Mediates rapid endocytosis (RE), a Ca(2+)-dependent and clathrin- and K(+)-independent process in chromaffin cells. Microtubule-associated force-producing protein involved in producing microtubule bundles and able to bind and hydrolyze GTP. Through its interaction with DNAJC6, acts during the early steps of clathrin-coated vesicle (CCV) formation. This is Dynamin-1 (Dnm1) from Rattus norvegicus (Rat).